The chain runs to 403 residues: Ribosomal RNA large subunit methyltransferase I (403 aa).

A PUA domain is found at 9–88; that stretch reads YPRLVLSKGR…EPVDIAFFTR (80 aa).

Belongs to the methyltransferase superfamily. RlmI family.

It is found in the cytoplasm. The enzyme catalyses cytidine(1962) in 23S rRNA + S-adenosyl-L-methionine = 5-methylcytidine(1962) in 23S rRNA + S-adenosyl-L-homocysteine + H(+). Functionally, specifically methylates the cytosine at position 1962 (m5C1962) of 23S rRNA. This is Ribosomal RNA large subunit methyltransferase I from Salmonella arizonae (strain ATCC BAA-731 / CDC346-86 / RSK2980).